Here is a 341-residue protein sequence, read N- to C-terminus: 4-hydroxy-2-oxovalerate aldolase (341 aa).

A Pyruvate carboxyltransferase domain is found at 9 to 259 (VRITEVCLRD…KLDIDLYKMM (251 aa)). 17-18 (RD) provides a ligand contact to substrate. Mn(2+) is bound at residue aspartate 18. Histidine 21 serves as the catalytic Proton acceptor. Residues serine 171 and histidine 198 each coordinate substrate. Mn(2+)-binding residues include histidine 198 and histidine 200. Tyrosine 289 is a binding site for substrate.

It belongs to the 4-hydroxy-2-oxovalerate aldolase family.

It catalyses the reaction (S)-4-hydroxy-2-oxopentanoate = acetaldehyde + pyruvate. The chain is 4-hydroxy-2-oxovalerate aldolase (dmpG) from Bacillus cereus (strain 03BB102).